We begin with the raw amino-acid sequence, 283 residues long: Protoheme IX farnesyltransferase 1 (283 aa).

9 helical membrane-spanning segments follow: residues 14 to 34, 35 to 55, 84 to 104, 107 to 127, 133 to 153, 163 to 183, 208 to 228, 231 to 251, and 258 to 278; these read IALM…TKVD, PVAL…SAVF, LGFA…NAAF, VVAL…TVWL, TNII…AAAV, VLAL…AILL, ILAN…LGLL, VYGF…VVLV, and WAGW…IAVF.

The protein belongs to the UbiA prenyltransferase family. Protoheme IX farnesyltransferase subfamily.

The protein resides in the cell inner membrane. It catalyses the reaction heme b + (2E,6E)-farnesyl diphosphate + H2O = Fe(II)-heme o + diphosphate. It participates in porphyrin-containing compound metabolism; heme O biosynthesis; heme O from protoheme: step 1/1. Converts heme B (protoheme IX) to heme O by substitution of the vinyl group on carbon 2 of heme B porphyrin ring with a hydroxyethyl farnesyl side group. In Paramagnetospirillum magneticum (strain ATCC 700264 / AMB-1) (Magnetospirillum magneticum), this protein is Protoheme IX farnesyltransferase 1.